Reading from the N-terminus, the 100-residue chain is Large ribosomal subunit protein uL23 (100 aa).

Belongs to the universal ribosomal protein uL23 family. In terms of assembly, part of the 50S ribosomal subunit. Contacts protein L29, and trigger factor when it is bound to the ribosome.

One of the early assembly proteins it binds 23S rRNA. One of the proteins that surrounds the polypeptide exit tunnel on the outside of the ribosome. Forms the main docking site for trigger factor binding to the ribosome. The protein is Large ribosomal subunit protein uL23 of Mycobacterium tuberculosis (strain ATCC 25177 / H37Ra).